The following is a 697-amino-acid chain: Ribosomal RNA large subunit methyltransferase K/L (697 aa).

The THUMP domain occupies 43–154 (ILYNSLMWSR…QNLVHIMLDL (112 aa)).

The protein belongs to the methyltransferase superfamily. RlmKL family.

Its subcellular location is the cytoplasm. The catalysed reaction is guanosine(2445) in 23S rRNA + S-adenosyl-L-methionine = N(2)-methylguanosine(2445) in 23S rRNA + S-adenosyl-L-homocysteine + H(+). It carries out the reaction guanosine(2069) in 23S rRNA + S-adenosyl-L-methionine = N(2)-methylguanosine(2069) in 23S rRNA + S-adenosyl-L-homocysteine + H(+). Its function is as follows. Specifically methylates the guanine in position 2445 (m2G2445) and the guanine in position 2069 (m7G2069) of 23S rRNA. This Buchnera aphidicola subsp. Schizaphis graminum (strain Sg) protein is Ribosomal RNA large subunit methyltransferase K/L.